Reading from the N-terminus, the 146-residue chain is MKYNPRVTSSRRRNRKPHFTASSSERRVXMSSPLSTDLRQKYNVRSMPIRKDDEXQIVRGTYKGREGKLXQVYRRKXVIHIERLTREKVNGTTVNVGVQPTKVVITKLRLDKDRKSLLERKAKGRAAADKDKGTKFTAVDVMQNVX.

The disordered stretch occupies residues 1–33 (MKYNPRVTSSRRRNRKPHFTASSSERRVXMSSP). The span at 9–18 (SSRRRNRKPH) shows a compositional bias: basic residues.

This sequence belongs to the universal ribosomal protein uL24 family.

The sequence is that of Large ribosomal subunit protein uL24 (RPL26) from Brassica campestris (Field mustard).